Reading from the N-terminus, the 623-residue chain is Glutathione import ATP-binding protein GsiA (623 aa).

ABC transporter domains follow at residues 15–269 (VSGL…QTLL) and 325–564 (LRSG…RKLM). ATP-binding positions include 49 to 56 (GESGSGKS) and 357 to 364 (GESGSGKS).

This sequence belongs to the ABC transporter superfamily. Glutathione importer (TC 3.A.1.5.11) family. The complex is composed of two ATP-binding proteins (GsiA), two transmembrane proteins (GsiC and GsiD) and a solute-binding protein (GsiB).

It localises to the cell inner membrane. The catalysed reaction is glutathione(out) + ATP + H2O = glutathione(in) + ADP + phosphate + H(+). In terms of biological role, part of the ABC transporter complex GsiABCD involved in glutathione import. Responsible for energy coupling to the transport system. The protein is Glutathione import ATP-binding protein GsiA of Salmonella paratyphi A (strain ATCC 9150 / SARB42).